Reading from the N-terminus, the 735-residue chain is Transcription factor sphG (735 aa).

Residues 13 to 40 (CDQCRARKIRCSREKPSCRNCGRLGLQC) constitute a DNA-binding region (zn(2)-C6 fungal-type). Positions 89 to 110 (TISPSARCPASPASPSPRLSDK) are disordered. The span at 91-106 (SPSARCPASPASPSPR) shows a compositional bias: low complexity.

The protein localises to the nucleus. Transcription factor that regulates the expression of the gene cluster that mediates the biosynthesis of sphingofungins, bioactive molecules acting as sphingolipid inhibitors via inhibiting serine palmitoyl transferase (SPT). The chain is Transcription factor sphG from Aspergillus fumigatus (strain CBS 144.89 / FGSC A1163 / CEA10) (Neosartorya fumigata).